The sequence spans 382 residues: DnaJ homolog dnj-20 (382 aa).

Positions 1–21 (MRILNVSLLVLTAFLVDFVEC) are cleaved as a signal peptide. In terms of domain architecture, J spans 24–89 (DFYKILGVSK…EKRAMYDRHG (66 aa)).

This chain is DnaJ homolog dnj-20, found in Caenorhabditis briggsae.